Reading from the N-terminus, the 549-residue chain is Probable protein kinase UbiB (549 aa).

The Protein kinase domain maps to 123–501; sequence DFNETPLASA…QQQAHKSNYL (379 aa). ATP is bound by residues 129 to 137 and Lys-152; that span reads LASASISQV. Asp-287 (proton acceptor) is an active-site residue. 2 helical membrane-spanning segments follow: residues 498-518 and 520-540; these read SNYL…LFNQ and ATLW…IIGW.

Belongs to the ABC1 family. UbiB subfamily.

The protein localises to the cell inner membrane. Its pathway is cofactor biosynthesis; ubiquinone biosynthesis [regulation]. Is probably a protein kinase regulator of UbiI activity which is involved in aerobic coenzyme Q (ubiquinone) biosynthesis. The chain is Probable protein kinase UbiB from Shewanella sp. (strain MR-4).